A 68-amino-acid chain; its full sequence is Metallothionein-3 (68 aa).

M1 is subject to N-acetylmethionine. The beta stretch occupies residues 1-30 (MDPETCPCPSGGSCTCADSCKCEGCKCTSC). Positions 6, 8, 14, 16, 20, 22, 25, 27, and 30 each coordinate a divalent metal cation. Residues 31-68 (KKSCCSCCPAECEKCAKDCVCKGGEAAEAEAEKCSCCQ) are alpha. The residue at position 33 (S33) is a Phosphoserine. A divalent metal cation is bound by residues C34, C35, C37, C38, C42, C45, C49, C51, C64, C66, and C67.

The protein belongs to the metallothionein superfamily. Type 1 family. In terms of tissue distribution, abundant in a subset of astrocytes in the normal human brain, but greatly reduced in the Alzheimer disease (AD) brain.

Its function is as follows. Binds heavy metals. Contains three zinc and three copper atoms per polypeptide chain and only a negligible amount of cadmium. Inhibits survival and neurite formation of cortical neurons in vitro. The chain is Metallothionein-3 (MT3) from Homo sapiens (Human).